The primary structure comprises 568 residues: Phosphoprotein (568 aa).

2 disordered regions span residues 1-23 (MDQD…GGRE) and 38-320 (SEPT…GIGE). Residues 7 to 20 (ILKEDSEVEREAPG) are compositionally biased toward basic and acidic residues. An N0 binding region spans residues 33–41 (DAVLSSEPT). Polar residues predominate over residues 50 to 59 (LHNTINTPQG). Ser-68 is modified (phosphoserine; by host). The span at 83–101 (RSGEESRVSGRTSKPEAEA) shows a compositional bias: basic and acidic residues. The residue at position 125 (Ser-125) is a Phosphoserine; by host. The span at 150 to 168 (GIEDENREMAAHPDKRGED) shows a compositional bias: basic and acidic residues. Residues 191–206 (ASNNGRSMEPGSSHSA) show a composition bias toward polar residues. Phosphoserine; by host occurs at positions 192, 249, 257, and 260. Multimerization regions lie at residues 344-411 (FESS…KRFS) and 362-432 (ANYA…HIIT). The tract at residues 345-412 (ESSRDASYVF…FRDIYKRFSE (68 aa)) is bipartite nucleocapsid binding domain 1. Residues 364-429 (YAEMTFNVCG…LLMSNLSTLH (66 aa)) are a coiled coil. L protein binding regions lie at residues 412–445 (EYQK…DSLT) and 413–445 (YQKE…DSLT). 2 positions are modified to phosphoserine; by host: Ser-447 and Ser-449. The segment at 479 to 568 (DLIREDEFRD…VEEDIESLTN (90 aa)) is bipartite nucleocapsid binding domain 2. The interaction with the nucleocapsid (N-RNA) stretch occupies residues 479 to 568 (DLIREDEFRD…VEEDIESLTN (90 aa)). Positions 495-516 (YQERDTEPRASNASRLLPSKEK) are disordered. Residues 547–566 (KTDQEVKAVMELVEEDIESL) are formation of N-RNA complex involved in transcription and replication.

Belongs to the respirovirus P protein family. As to quaternary structure, homotetramer. Interacts (via multimerization domain) with polymerase L; this interaction forms the polymerase complex. Interacts (via N-terminus) with N0; this interaction allows P to chaperon N0 before encapsidation and form the N-P complex. Interacts (via C-terminus) with N-RNA template; this interaction positions the polymerase on the template. In terms of processing, phosphorylated by PKC/PRKCZ, and other unknown kinases. Phosphorylation is necessary for viral transcription and replication. The N-terminus contains the majority of phosphorylated sites. Ser-249 is the major site of phosphorylation, but is not necessary for most functions.

It localises to the host cytoplasm. Its function is as follows. Essential cofactor of the RNA polymerase L that plays a central role in the transcription and replication by forming the polymerase complex with RNA polymerase L and recruiting L to the genomic N-RNA template for RNA synthesis. Also plays a central role in the encapsidation of nascent RNA chains by forming the encapsidation complex with the nucleocapsid protein N (N-P complex). Acts as a chaperone for newly synthesized free N protein, so-called N0, allowing encapsidation of nascent RNA chains during replication. The nucleoprotein protein N prevents excessive phosphorylation of P, which leads to down-regulation of viral transcription/ replication. Participates, together with N, in the formation of viral factories (viroplasms), which are large inclusions in the host cytoplasm where replication takes place. Recruits host PI4KB and remodel the host endoplasmic reticulum membrane to form viral replication factories. This Sendai virus (strain Fushimi) (SeV) protein is Phosphoprotein (P/V/C).